Consider the following 371-residue polypeptide: Alginate lyase (371 aa).

Residues 1 to 28 (MRRPMTLFKRISSPALLALALFGGAAHA) form the signal peptide. Substrate-binding positions include 67–68 (SK), 140–141 (HT), and Y258.

This sequence belongs to the polysaccharide lyase 5 family.

Its subcellular location is the periplasm. The enzyme catalyses Eliminative cleavage of alginate to give oligosaccharides with 4-deoxy-alpha-L-erythro-hex-4-enuronosyl groups at their non-reducing ends and beta-D-mannuronate at their reducing end.. Its function is as follows. Catalyzes the depolymerization of alginate by cleaving the beta-1,4 glycosidic bond between two adjacent sugar residues via a beta-elimination mechanism. May serve to degrade mislocalized alginate that is trapped in the periplasmic space. The protein is Alginate lyase of Pseudomonas putida (strain ATCC 47054 / DSM 6125 / CFBP 8728 / NCIMB 11950 / KT2440).